The sequence spans 360 residues: MAPRRERVSTLPRLQLLVLLLLPLMLVPQPIAGHGGKYSREKNEPEMAAKRESGEEFRMEKLNQLWEKAKRLHLSPVRLAELHSDLKIQERDELNWKKLKVEGLDKDGEKEAKLIHNLNVILARYGLDGRKDAQMVHSNALNEDTQDELGDPRLEKLWHKAKTSGKFSSEELDKLWREFLHYKEKIQEYNVLLDTLSRAEEGYENLLSPSDMAHIKSDTLISKHSELKDRLRSINQGLDRLRKVSHQGYGSTTEFEEPRVIDLWDLAQSANFTEKELESFREELKHFEAKIEKHNHYQKQLEISHQKLKHVESIGDPEHISRNKEKYVLLEEKTKELGYKVKKHLQDLSSRVSRARHNEL.

Residues 1-28 (MAPRRERVSTLPRLQLLVLLLLPLMLVP) form the signal peptide. S53 and S138 each carry phosphoserine. Residues 184-302 (EKIQEYNVLL…KHNHYQKQLE (119 aa)) are a coiled coil. The tract at residues 240 to 356 (RLRKVSHQGY…DLSSRVSRAR (117 aa)) is LDL receptor binding. The N-linked (GlcNAc...) asparagine glycan is linked to N271. The Prevents secretion from ER signature appears at 357 to 360 (HNEL).

Belongs to the alpha-2-MRAP family. As to quaternary structure, interacts with the LRP1/alpha-2-macroglobulin receptor heavy and light chains; the interaction is transient and coincides with a reduction of ligand binding by the receptor. Interacts with LRP2/glycoprotein 330. Interacts with LRP1B; binding is followed by internalization and degradation. Interacts with LDLR. Interacts with SORL1. Interacts with LRP1; this interaction is followed by rapid internalization. Post-translationally, N-glycosylated. As to expression, highly expressed in PYS-2 parietal endoderm cells and in the kidney. The RNA level increased about 10-fold during differentiation of F9 embryonal carcinoma cells to parietal endoderm cells.

It localises to the rough endoplasmic reticulum lumen. It is found in the endoplasmic reticulum-Golgi intermediate compartment lumen. Its subcellular location is the golgi apparatus. The protein localises to the cis-Golgi network. The protein resides in the golgi apparatus lumen. It localises to the endosome lumen. It is found in the cell surface. Molecular chaperone for LDL receptor-related proteins that may regulate their ligand binding activity along the secretory pathway. This chain is Alpha-2-macroglobulin receptor-associated protein (Lrpap1), found in Mus musculus (Mouse).